We begin with the raw amino-acid sequence, 548 residues long: MYEDDIRRIALINAYQHEGKADLKSVMGKVMAEIPDLRRDPRSAREMVSRIVDEVNSMSAYEIRETVETRYTSSIRKEKKVEEHRLPDLEGVNGPVVMRMAPSPSGPLHIGHTRMAILNDEYVKRYGGELILRIEDTNPKNIDPDAYHMIPEDLEWLGVNVTKIVIQSDRFDLYYAEAKKLMENGHMYVCTCPREEFKKRKLESIPCKDRDNPPETNLELFDKMIDGTIKEGDAVAVVKTDLKHPNPSVRDWIAFRIIEARHPRVDDKYRVYPMMSFSVAVDDHYLGLTHVLRGKDQLTNTDKQRYIFDYNGWKKPYYYHYGMIKFPGIKLKTSLMKKGILSGQYEGWSDIRLGTVRAFAKRGYRPETFRRYWINSGLREIDAIFSIEIFDSINREIVDPRAYRFSFVKDPVPVRIEGMPNISAKLPLHPTHPEYGFREYEVKGSVYIASRDFAAISEGERIRLKDLCYIRKKGNGIIYDGVEMTEKTKIINWCPEGSRDFSVLKPDGSKDSGLIEPKSSGYRGIAQLERYGYVNFADGDDLAYFTHP.

Positions 102–112 match the 'HIGH' region motif; it reads PSPSGPLHIGH.

Belongs to the class-I aminoacyl-tRNA synthetase family. Glutamate--tRNA ligase type 2 subfamily.

Its subcellular location is the cytoplasm. It catalyses the reaction tRNA(Glu) + L-glutamate + ATP = L-glutamyl-tRNA(Glu) + AMP + diphosphate. Catalyzes the attachment of glutamate to tRNA(Glu) in a two-step reaction: glutamate is first activated by ATP to form Glu-AMP and then transferred to the acceptor end of tRNA(Glu). The protein is Glutamate--tRNA ligase of Thermoplasma acidophilum (strain ATCC 25905 / DSM 1728 / JCM 9062 / NBRC 15155 / AMRC-C165).